The sequence spans 118 residues: Large ribosomal subunit protein bL19 (118 aa).

Belongs to the bacterial ribosomal protein bL19 family.

Functionally, this protein is located at the 30S-50S ribosomal subunit interface and may play a role in the structure and function of the aminoacyl-tRNA binding site. The protein is Large ribosomal subunit protein bL19 of Aliarcobacter butzleri (strain RM4018) (Arcobacter butzleri).